Here is a 390-residue protein sequence, read N- to C-terminus: Probable L-tyrosine/L-aspartate decarboxylase (390 aa).

At K239 the chain carries N6-(pyridoxal phosphate)lysine.

It belongs to the group II decarboxylase family. MfnA subfamily. Pyridoxal 5'-phosphate is required as a cofactor.

The enzyme catalyses L-tyrosine + H(+) = tyramine + CO2. It catalyses the reaction L-aspartate + H(+) = beta-alanine + CO2. It participates in cofactor biosynthesis; methanofuran biosynthesis. It functions in the pathway cofactor biosynthesis; coenzyme A biosynthesis. Catalyzes the decarboxylation of L-tyrosine to produce tyramine for methanofuran biosynthesis. Can also catalyze the decarboxylation of L-aspartate to produce beta-alanine for coenzyme A (CoA) biosynthesis. In Methanococcus aeolicus (strain ATCC BAA-1280 / DSM 17508 / OCM 812 / Nankai-3), this protein is Probable L-tyrosine/L-aspartate decarboxylase.